The following is a 470-amino-acid chain: AAA-ATPase At5g17730 (470 aa).

A signal peptide spans 1–18 (MFSLRNLPSLAPFVSAYA). 252–259 (GPPGTGKT) serves as a coordination point for ATP.

This sequence belongs to the AAA ATPase family. BCS1 subfamily. Mg(2+) is required as a cofactor.

It catalyses the reaction ATP + H2O = ADP + phosphate + H(+). In Arabidopsis thaliana (Mouse-ear cress), this protein is AAA-ATPase At5g17730.